We begin with the raw amino-acid sequence, 1377 residues long: DNA-directed RNA polymerase subunit beta (1377 aa).

Belongs to the RNA polymerase beta chain family. The RNAP catalytic core consists of 2 alpha, 1 beta, 1 beta' and 1 omega subunit. When a sigma factor is associated with the core the holoenzyme is formed, which can initiate transcription.

The enzyme catalyses RNA(n) + a ribonucleoside 5'-triphosphate = RNA(n+1) + diphosphate. DNA-dependent RNA polymerase catalyzes the transcription of DNA into RNA using the four ribonucleoside triphosphates as substrates. In Brucella abortus (strain S19), this protein is DNA-directed RNA polymerase subunit beta.